The chain runs to 143 residues: 3-hydroxyacyl-[acyl-carrier-protein] dehydratase FabZ (143 aa).

His47 is an active-site residue.

This sequence belongs to the thioester dehydratase family. FabZ subfamily.

The protein localises to the cytoplasm. It catalyses the reaction a (3R)-hydroxyacyl-[ACP] = a (2E)-enoyl-[ACP] + H2O. In terms of biological role, involved in unsaturated fatty acids biosynthesis. Catalyzes the dehydration of short chain beta-hydroxyacyl-ACPs and long chain saturated and unsaturated beta-hydroxyacyl-ACPs. In Moorella thermoacetica (strain ATCC 39073 / JCM 9320), this protein is 3-hydroxyacyl-[acyl-carrier-protein] dehydratase FabZ.